A 377-amino-acid polypeptide reads, in one-letter code: D-alanine--D-alanine ligase (377 aa).

The ATP-grasp domain occupies 141–347; that stretch reads KRILNQAGIR…YSELIDRLIQ (207 aa). 171–226 lines the ATP pocket; the sequence is KEELGDLVFVKPAKQGSSVGIHKVDTEEEYETAMKDAFTYDYKVLVEAGIKNPREI. Mg(2+)-binding residues include aspartate 301, glutamate 314, and asparagine 316.

Belongs to the D-alanine--D-alanine ligase family. Mg(2+) is required as a cofactor. It depends on Mn(2+) as a cofactor.

Its subcellular location is the cytoplasm. The catalysed reaction is 2 D-alanine + ATP = D-alanyl-D-alanine + ADP + phosphate + H(+). It participates in cell wall biogenesis; peptidoglycan biosynthesis. Cell wall formation. This chain is D-alanine--D-alanine ligase, found in Limosilactobacillus fermentum (strain NBRC 3956 / LMG 18251) (Lactobacillus fermentum).